The sequence spans 397 residues: Serpin B10 (397 aa).

Positions 74-77 (KKRK) match the Nuclear localization signal motif.

Belongs to the serpin family. Ov-serpin subfamily.

The protein resides in the nucleus. It is found in the cytoplasm. Its function is as follows. Protease inhibitor that may play a role in the regulation of protease activities during hematopoiesis and apoptosis induced by TNF. May regulate protease activities in the cytoplasm and in the nucleus. This chain is Serpin B10 (SERPINB10), found in Sorex araneus (Eurasian common shrew).